Reading from the N-terminus, the 484-residue chain is Endoglucanase 3 (484 aa).

Residues 1–21 (MASPFFFVFLLSALSLENTYA) form the signal peptide. Aspartate 77 functions as the Nucleophile in the catalytic mechanism. N-linked (GlcNAc...) asparagine glycosylation occurs at asparagine 370. Catalysis depends on residues histidine 402, aspartate 453, and glutamate 462.

It belongs to the glycosyl hydrolase 9 (cellulase E) family. Specifically expressed in root cap cells.

It is found in the secreted. The enzyme catalyses Endohydrolysis of (1-&gt;4)-beta-D-glucosidic linkages in cellulose, lichenin and cereal beta-D-glucans.. May be involved in the sloughing (cell-cell separation) of the root cap cells from root tip. The chain is Endoglucanase 3 (CEL5) from Arabidopsis thaliana (Mouse-ear cress).